Reading from the N-terminus, the 97-residue chain is MELKSGLSILLCFGICIAVINAGCFEDWSRCSPSTSRGTGVLWRDCDSYCKVCFKADRGECFDSPSLNCPQRLPNNKQCRCINARTAKDNRNPTCWA.

A signal peptide spans 1–22 (MELKSGLSILLCFGICIAVINA). 5 cysteine pairs are disulfide-bonded: Cys-24–Cys-31, Cys-46–Cys-50, Cys-53–Cys-95, Cys-61–Cys-69, and Cys-79–Cys-81.

In terms of tissue distribution, coelomic liquid (at protein level). Expressed in large fat cells in contact with coelomic cavities, in intestinal epithelia and at the epidermis level.

The protein resides in the secreted. In terms of biological role, has a bactericidal activity. Active against M.luteus. No activity toward E.coli and F.oxysporum. This Theromyzon tessulatum (Duck leech) protein is Theromacin.